The following is a 586-amino-acid chain: Switch-associated protein 70 (586 aa).

Residues 210 to 306 (DVLKQGYMLK…WIQAIQTTVS (97 aa)) form the PH domain. Positions 316–538 (HKEARQKRKE…NNTRSWKDKV (223 aa)) form a coiled coil.

As to quaternary structure, the SWAP complex consists of NPM1, NCL, PARP1 and SWAP70. Post-translationally, tyrosine-phosphorylated.

Its subcellular location is the cytoplasm. The protein localises to the cell membrane. The protein resides in the nucleus. It is found in the cell projection. It localises to the lamellipodium. In terms of biological role, phosphatidylinositol 3,4,5-trisphosphate-dependent guanine nucleotide exchange factor (GEF) which, independently of RAS, transduces signals from tyrosine kinase receptors to RAC. It also mediates signaling of membrane ruffling. Regulates the actin cytoskeleton as an effector or adapter protein in response to agonist stimulated phosphatidylinositol (3,4)-bisphosphate production and cell protrusion. The protein is Switch-associated protein 70 (SWAP70) of Gallus gallus (Chicken).